The primary structure comprises 228 residues: N-acylneuraminate cytidylyltransferase (228 aa).

Belongs to the CMP-NeuNAc synthase family.

The protein localises to the cytoplasm. The enzyme catalyses an N-acylneuraminate + CTP = a CMP-N-acyl-beta-neuraminate + diphosphate. The sequence is that of N-acylneuraminate cytidylyltransferase (neuA) from Neisseria meningitidis serogroup B (strain ATCC BAA-335 / MC58).